Here is a 488-residue protein sequence, read N- to C-terminus: Glutamyl-tRNA(Gln) amidotransferase subunit A (488 aa).

Active-site charge relay system residues include lysine 77 and serine 152. Residue serine 176 is the Acyl-ester intermediate of the active site.

Belongs to the amidase family. GatA subfamily. In terms of assembly, heterotrimer of A, B and C subunits.

The catalysed reaction is L-glutamyl-tRNA(Gln) + L-glutamine + ATP + H2O = L-glutaminyl-tRNA(Gln) + L-glutamate + ADP + phosphate + H(+). In terms of biological role, allows the formation of correctly charged Gln-tRNA(Gln) through the transamidation of misacylated Glu-tRNA(Gln) in organisms which lack glutaminyl-tRNA synthetase. The reaction takes place in the presence of glutamine and ATP through an activated gamma-phospho-Glu-tRNA(Gln). This is Glutamyl-tRNA(Gln) amidotransferase subunit A from Streptococcus uberis (strain ATCC BAA-854 / 0140J).